The sequence spans 282 residues: NADPH-dependent 7-cyano-7-deazaguanine reductase (282 aa).

88 to 90 provides a ligand contact to substrate; the sequence is IES. 90–91 contributes to the NADPH binding site; it reads SK. Residue C190 is the Thioimide intermediate of the active site. The active-site Proton donor is the D197. 229-230 is a substrate binding site; the sequence is HE. Residue 258–259 coordinates NADPH; it reads RG.

The protein belongs to the GTP cyclohydrolase I family. QueF type 2 subfamily. As to quaternary structure, homodimer.

It localises to the cytoplasm. It catalyses the reaction 7-aminomethyl-7-carbaguanine + 2 NADP(+) = 7-cyano-7-deazaguanine + 2 NADPH + 3 H(+). It functions in the pathway tRNA modification; tRNA-queuosine biosynthesis. Catalyzes the NADPH-dependent reduction of 7-cyano-7-deazaguanine (preQ0) to 7-aminomethyl-7-deazaguanine (preQ1). In Salmonella arizonae (strain ATCC BAA-731 / CDC346-86 / RSK2980), this protein is NADPH-dependent 7-cyano-7-deazaguanine reductase.